The sequence spans 449 residues: Phosphomethylpyrimidine synthase (449 aa).

Residues Asn80, Met109, Tyr138, His173, 193-195, 234-237, and Glu273 each bind substrate; these read SRG and DSLR. Zn(2+) is bound at residue His277. Position 300 (Tyr300) interacts with substrate. His341 serves as a coordination point for Zn(2+). [4Fe-4S] cluster contacts are provided by Cys421, Cys424, and Cys429.

The protein belongs to the ThiC family. In terms of assembly, homodimer. [4Fe-4S] cluster is required as a cofactor.

It carries out the reaction 5-amino-1-(5-phospho-beta-D-ribosyl)imidazole + S-adenosyl-L-methionine = 4-amino-2-methyl-5-(phosphooxymethyl)pyrimidine + CO + 5'-deoxyadenosine + formate + L-methionine + 3 H(+). The protein operates within cofactor biosynthesis; thiamine diphosphate biosynthesis. Functionally, catalyzes the synthesis of the hydroxymethylpyrimidine phosphate (HMP-P) moiety of thiamine from aminoimidazole ribotide (AIR) in a radical S-adenosyl-L-methionine (SAM)-dependent reaction. This is Phosphomethylpyrimidine synthase from Campylobacter hominis (strain ATCC BAA-381 / DSM 21671 / CCUG 45161 / LMG 19568 / NCTC 13146 / CH001A).